Here is a 247-residue protein sequence, read N- to C-terminus: tRNA (guanine-N(1)-)-methyltransferase (247 aa).

Residues Gly-113 and 133–138 each bind S-adenosyl-L-methionine; that span reads IGDFVM.

Belongs to the RNA methyltransferase TrmD family. As to quaternary structure, homodimer.

The protein resides in the cytoplasm. It carries out the reaction guanosine(37) in tRNA + S-adenosyl-L-methionine = N(1)-methylguanosine(37) in tRNA + S-adenosyl-L-homocysteine + H(+). In terms of biological role, specifically methylates guanosine-37 in various tRNAs. This chain is tRNA (guanine-N(1)-)-methyltransferase, found in Vibrio campbellii (strain ATCC BAA-1116).